The sequence spans 259 residues: tRNA (guanine-N(7)-)-methyltransferase (259 aa).

The segment at 1 to 73 (MGHHGQMHAQ…GPAEDPDRPG (73 aa)) is disordered. The S-adenosyl-L-methionine site is built by Glu-91, Glu-116, Asn-143, and Asp-166. Asp-166 is a catalytic residue. Residues Lys-170, Asp-202, and 238–241 (TKYE) contribute to the substrate site.

This sequence belongs to the class I-like SAM-binding methyltransferase superfamily. TrmB family.

The catalysed reaction is guanosine(46) in tRNA + S-adenosyl-L-methionine = N(7)-methylguanosine(46) in tRNA + S-adenosyl-L-homocysteine. The protein operates within tRNA modification; N(7)-methylguanine-tRNA biosynthesis. Its function is as follows. Catalyzes the formation of N(7)-methylguanine at position 46 (m7G46) in tRNA. The protein is tRNA (guanine-N(7)-)-methyltransferase of Mycolicibacterium paratuberculosis (strain ATCC BAA-968 / K-10) (Mycobacterium paratuberculosis).